The following is a 408-amino-acid chain: Imidazolonepropionase (408 aa).

The Fe(3+) site is built by His-73 and His-75. Positions 73 and 75 each coordinate Zn(2+). Residues Arg-82, Tyr-145, and His-178 each coordinate 4-imidazolone-5-propanoate. Tyr-145 contributes to the N-formimidoyl-L-glutamate binding site. His-243 contributes to the Fe(3+) binding site. His-243 contributes to the Zn(2+) binding site. 4-imidazolone-5-propanoate is bound at residue Gln-246. Residue Asp-318 coordinates Fe(3+). Position 318 (Asp-318) interacts with Zn(2+). N-formimidoyl-L-glutamate is bound by residues Asn-320 and Gly-322. Ser-323 serves as a coordination point for 4-imidazolone-5-propanoate.

This sequence belongs to the metallo-dependent hydrolases superfamily. HutI family. It depends on Zn(2+) as a cofactor. Fe(3+) serves as cofactor.

The protein localises to the cytoplasm. It carries out the reaction 4-imidazolone-5-propanoate + H2O = N-formimidoyl-L-glutamate. It functions in the pathway amino-acid degradation; L-histidine degradation into L-glutamate; N-formimidoyl-L-glutamate from L-histidine: step 3/3. Functionally, catalyzes the hydrolytic cleavage of the carbon-nitrogen bond in imidazolone-5-propanoate to yield N-formimidoyl-L-glutamate. It is the third step in the universal histidine degradation pathway. The polypeptide is Imidazolonepropionase (Shewanella putrefaciens (strain CN-32 / ATCC BAA-453)).